Reading from the N-terminus, the 218-residue chain is Fibroblast growth factor 15 (218 aa).

The N-terminal stretch at 1 to 25 (MARKWNGRAVARALVLATLWLAVSG) is a signal peptide.

This sequence belongs to the heparin-binding growth factors family. As to quaternary structure, interacts with MALRD1. Expressed in the developing brain.

The protein localises to the secreted. Its function is as follows. Involved in the suppression of bile acid biosynthesis through down-regulation of CYP7A1 expression. This Mus musculus (Mouse) protein is Fibroblast growth factor 15 (Fgf15).